We begin with the raw amino-acid sequence, 3015 residues long: Genome polyprotein (3015 aa).

S2 bears the N-acetylserine; by host mark. Positions 2–23 (STLPKPQRKTKRNTNRRPMDVK) are interaction with STAT1. Residues 2-58 (STLPKPQRKTKRNTNRRPMDVKFPGGGQIVGGVYLLPRRGPRLGVRATRKTSERSQP) are interaction with EIF2AK2/PKR. Positions 2 to 59 (STLPKPQRKTKRNTNRRPMDVKFPGGGQIVGGVYLLPRRGPRLGVRATRKTSERSQPR) are interaction with DDX3X. The tract at residues 2 to 75 (STLPKPQRKT…PKARQPIGRS (74 aa)) is disordered. At 2–168 (STLPKPQRKT…EDGVNYATGN (167 aa)) the chain is on the cytoplasmic side. 2 consecutive short sequence motifs (nuclear localization signal) follow at residues 5-13 (PKPQRKTKR) and 38-43 (PRRGPR). Residues 7 to 16 (PQRKTKRNTN) show a composition bias toward basic residues. Low complexity predominate over residues 32 to 47 (GGVYLLPRRGPRLGVR). At S53 the chain carries Phosphoserine; by host. 2 consecutive short sequence motifs (nuclear localization signal) follow at residues 58-64 (PRGRRQP) and 66-71 (PKARQP). 2 positions are modified to phosphoserine; by host: S99 and S116. The tract at residues 112-152 (PRRRSRNLGKVIDTLTCGLADLMGYIPVLGGPLGGVAAALA) is important for endoplasmic reticulum and mitochondrial localization. Residues 122–173 (VIDTLTCGLADLMGYIPVLGGPLGGVAAALAHGVRAIEDGVNYATGNLPGCS) form an interaction with APOA2 region. Positions 164–167 (YATG) are important for lipid droplets localization. Residues 169–189 (LPGCSFSIFLLALLSCLTTPA) form a helical membrane-spanning segment. Positions 178 to 191 (LLALLSCLTTPASA) are cleaved as a propeptide — ER anchor for the core protein, removed in mature form by host signal peptidase. The Lumenal segment spans residues 190–358 (SAIQVRNASG…TGAHWGVLGA (169 aa)). N-linked (GlcNAc...) asparagine; by host glycans are attached at residues N196, N209, N234, and N250. The tract at residues 265–296 (LVGAAAFCSAMYIGDLCGSVFLVGQLFTFRPK) is important for fusion. N305 is a glycosylation site (N-linked (GlcNAc...) asparagine; by host). The chain crosses the membrane as a helical span at residues 359-379 (LLYFSMVANWAKVIAVLFLFA). At 380-726 (GADATTYTGS…WEYVVLAFLV (347 aa)) the chain is on the lumenal side. The segment at 385-411 (TYTGSAVSSTTGAFVSLFSPGPTQNLQ) is HVR1. N-linked (GlcNAc...) (high mannose) asparagine; by host glycosylation is found at N416, N422, and N429. 4 disulfides stabilise this stretch: C428-C552, C451-C458, C486-C494, and C503-C508. N447 carries N-linked (GlcNAc...) asparagine; by host glycosylation. The HVR2 stretch occupies residues 474 to 478 (VNISG). N475 is a glycosylation site (N-linked (GlcNAc...) asparagine; by host). Residues 480-493 (SEDKPYCWHYAPRP) are CD81-binding 1. A glycan (N-linked (GlcNAc...) asparagine; by host) is linked at N532. The segment at 544–551 (PPLGAWFG) is CD81-binding 2. N-linked (GlcNAc...) asparagine; by host glycosylation is present at N556. Intrachain disulfides connect C564-C569, C582-C586, C598-C621, and C608-C645. 2 N-linked (GlcNAc...) (high mannose) asparagine; by host glycosylation sites follow: N624 and N646. The cysteines at positions 653 and 678 are disulfide-linked. Positions 661–672 (FEMSPLLFSTTQ) are PKR/eIF2-alpha phosphorylation homology domain (PePHD). A helical transmembrane segment spans residues 727–747 (LADARVCACLWLMFLVGQAEA). Residues 748–758 (ALENVIVLNAA) lie on the Lumenal side of the membrane. The chain crosses the membrane as a helical span at residues 759-779 (SAASCQGLLWGLIFICCAWHV). At 780–783 (RGRA) the chain is on the cytoplasmic side. Residues 784–804 (VPVTTYALLQLWPLLLLILAL) traverse the membrane as a helical segment. Over 805–814 (PRRAYAFDSE) the chain is Lumenal. Residues 815 to 835 (QAASAGLLVLGLITIFTLTPA) form a helical membrane-spanning segment. Residues 836–882 (YKQLLISMLWWIQYFIALTEAQLHQWVPSLLVRGGRDAVILLACLFH) lie on the Cytoplasmic side of the membrane. Residues 883-903 (PQLGFEVTKILLALLGPLYLL) form a helical membrane-spanning segment. The Lumenal portion of the chain corresponds to 904 to 929 (QYSLLKTPYFVRAHILLRACMFFRGM). The Peptidase C18 domain maps to 904–1027 (QYSLLKTPYF…DVKGKGWRLL (124 aa)). The interval 905–1207 (YSLLKTPYFV…PVESMQSSQR (303 aa)) is protease NS2-3. C923 carries the S-palmitoyl cysteine; by host lipid modification. The chain crosses the membrane as a helical span at residues 930-950 (ARGRYAQAILLRIGAWTGTYI). The tract at residues 930–950 (ARGRYAQAILLRIGAWTGTYI) is interaction with host SCPS1. At 951 to 1658 (YDHLAPLSDW…CMSADLEVIT (708 aa)) the chain is on the cytoplasmic side. Catalysis depends on for protease NS2 activity; shared with dimeric partner residues H953, E973, and C994. A Peptidase S29 domain is found at 1028 to 1209 (APITAYAQQT…ESMQSSQRSP (182 aa)). The active-site Charge relay system; for serine protease NS3 activity is the D1108. Zn(2+)-binding residues include C1124 and C1126. The active-site Charge relay system; for serine protease NS3 activity is the S1166. The Zn(2+) site is built by C1172 and H1176. Positions 1218-1370 (PAVPQTYQVG…PNITESALPT (153 aa)) constitute a Helicase ATP-binding domain. 1231–1238 (APTGSGKS) contributes to the ATP binding site. S1238 and E1318 together coordinate Mg(2+). Residues 1317 to 1320 (DECH) carry the DECH box motif. The RNA-binding stretch occupies residues 1487–1499 (QRRGRTGRGKHGV). Residues 1659-1679 (STWVLVGGVVAALAAYCLSVG) traverse the membrane as a helical segment. The segment at 1680–1691 (CVVICGRISTSG) is NS3-binding. The Cytoplasmic segment spans residues 1680 to 1806 (CVVICGRIST…SLTSPLSTHQ (127 aa)). Residues 1807–1827 (TLLLNILGGWVASQLANPTAS) form a helical membrane-spanning segment. Residues 1828 to 1829 (TA) are Lumenal-facing. Residues 1830–1850 (FVVSGLAGAAVGSIGLGRVIV) traverse the membrane as a helical segment. Residue D1851 is a topological domain, cytoplasmic. The helical transmembrane segment at 1852-1872 (VLAGYGAGVSGALVAFKIMCG) threads the bilayer. Residues 1873–1882 (ETPSAEDMVN) are Lumenal-facing. The helical transmembrane segment at 1883–1903 (LLPALLSPGALVVGVVCAAIL) threads the bilayer. Residues 1904–1973 (RRHAGPSEGA…WINTDWSTPC (70 aa)) lie on the Cytoplasmic side of the membrane. C1973 is lipidated: S-palmitoyl cysteine; by host. An intramembrane segment occupies 1974-2003 (SSSWLRDIWDWVCEVLSDFKTWLKAKLVPA). Residues 2004–2994 (LPGVPFLSCQ…YHSASRARPR (991 aa)) are Cytoplasmic-facing. 4 residues coordinate Zn(2+): C2012, C2030, C2032, and C2053. Residues 2121-2209 (EFFTEVDGVR…ASSSASQLSA (89 aa)) form an FKBP8-binding region. The tract at residues 2121–2334 (EFFTEVDGVR…PIPPPRRKKV (214 aa)) is transcriptional activation. The tract at residues 2136–2140 (PRCKP) is interaction with non-structural protein 4A. The interaction with host SKP2 stretch occupies residues 2190-2442 (RLARGSPPSL…ALVTPCAAEE (253 aa)). A phosphoserine; by host mark is found at S2195, S2198, S2202, S2205, S2208, and S2211. The ISDR stretch occupies residues 2211–2250 (SLKATCTMHGAHPDAELIEANLLWRQEMGGNITRVESENK). The segment at 2211 to 2276 (SLKATCTMHG…REMSVPAECH (66 aa)) is interaction with EIF2AK2/PKR. Positions 2250–2308 (KVVILDSFDPLVPEFEEREMSVPAECHRPRRPKFPPALPIWATPGYNPPVLETWKSPTY) are NS4B-binding. The tract at residues 2301-2378 (ETWKSPTYEP…PDHSTESSEH (78 aa)) is V3. Disordered regions lie at residues 2319-2338 (PPSG…VQLD) and 2352-2413 (KTFE…SWST). The SH3-binding motif lies at 2324-2327 (PPIP). A Nuclear localization signal motif is present at residues 2329 to 2337 (PRRKKVVQL). K2352 participates in a covalent cross-link: Glycyl lysine isopeptide (Lys-Gly) (interchain with G-Cter in ubiquitin). A compositionally biased stretch (polar residues) spans 2355–2365 (ETPSSPTTGYG). The span at 2368–2383 (QPDHSTESSEHDRDDG) shows a compositional bias: basic and acidic residues. S2453 and S2466 each carry phosphoserine; by host. In terms of domain architecture, RdRp catalytic spans 2638 to 2756 (PMGFSYDTRC…VTESAGVNED (119 aa)). Mg(2+) is bound by residues D2644, D2742, and D2743. A helical membrane pass occupies residues 2995 to 3015 (FLLLCLLLLSVGVGIFLLPAR).

It belongs to the hepacivirus polyprotein family. As to quaternary structure, homooligomer. Interacts with E1 (via C-terminus). Interacts with the non-structural protein 5A. Interacts (via N-terminus) with host STAT1 (via SH2 domain); this interaction results in decreased STAT1 phosphorylation and ubiquitin-mediated proteasome-dependent STAT1 degradation, leading to decreased IFN-stimulated gene transcription. Interacts with host STAT3; this interaction constitutively activates STAT3. Interacts with host LTBR receptor. Interacts with host TNFRSF1A receptor and possibly induces apoptosis. Interacts with host HNRPK. Interacts with host YWHAE. Interacts with host UBE3A/E6AP. Interacts with host DDX3X. Interacts with host APOA2. Interacts with host RXRA protein. Interacts with host SP110 isoform 3/Sp110b; this interaction sequesters the transcriptional corepressor SP110 away from the nucleus. Interacts with host CREB3 nuclear transcription protein; this interaction triggers cell transformation. Interacts with host ACY3. Interacts with host C1QR1. Interacts with host RBM24; this interaction, which enhances the interaction of the mature core protein with 5'-UTR, may inhibit viral translation and favor replication. Interacts with host EIF2AK2/PKR; this interaction induces the autophosphorylation of EIF2AK2. Part of the viral assembly initiation complex composed of NS2, E1, E2, NS3, NS4A, NS5A and the mature core protein. In terms of assembly, forms a heterodimer with envelope glycoprotein E2. Interacts with mature core protein. Interacts with protease NS2. The heterodimer E1/E2 interacts with host CLDN1; this interaction plays a role in viral entry into host cell. Interacts with host SPSB2 (via C-terminus). Part of the viral assembly initiation complex composed of NS2, E1, E2, NS3, NS4A, NS5A and the mature core protein. Interacts with host NEURL3; this interaction prevents E1 binding to glycoprotein E2. Forms a heterodimer with envelope glycoprotein E1. Interacts with host CD81 and SCARB1 receptors; these interactions play a role in viral entry into host cell. Interacts with host EIF2AK2/PKR; this interaction inhibits EIF2AK2 and probably allows the virus to evade the innate immune response. Interacts with host CD209/DC-SIGN and CLEC4M/DC-SIGNR. Interact with host SPCS1; this interaction is essential for viral particle assembly. Interacts with protease NS2. The heterodimer E1/E2 interacts with host CLDN1; this interaction plays a role in viral entry into host cell. Part of the viral assembly initiation complex composed of NS2, E1, E2, NS3, NS4A, NS5A and the mature core protein. Interacts with host SLC3A2/4F2hc; the interaction may facilitate viral entry into host cell. Interacts with human PLSCR1. As to quaternary structure, homohexamer. Homoheptamer. Interacts with protease NS2. In terms of assembly, homodimer. Interacts with host SPCS1; this interaction is essential for viral particle assembly. Interacts with envelope glycoprotein E1. Interacts with envelope glycoprotein E2. Interacts with viroporin p7. Interacts with serine protease/helicase NS3. Part of the replication complex composed of NS2, NS3, NS4A, NS4B, NS5A and the RNA-directed RNA polymerase embedded in an ER-derived membranous web. Part of the viral assembly initiation complex composed of NS2, E1, E2, NS3, NS4A, NS5A and the mature core protein. Interacts with protease NS2. Interacts with non-structural protein 4A; this interaction stabilizes the folding of NS3 serine protease. NS3-NS4A interaction is essential for NS3 activation and allows membrane anchorage of the latter. NS3/NS4A complex also prevents phosphorylation of host IRF3, thus preventing the establishment of dsRNA induced antiviral state. Interacts with host MAVS; this interaction leads to the cleavage and inhibition of host MAVS. Interacts with host TICAM1; this interaction leads to the cleavage and inhibition of host TICAM1. Interacts with host TANK-binding kinase/TBK1; this interaction results in the inhibition of the association between TBK1 and IRF3, which leads to the inhibition of IRF3 activation. Interacts with host RBM24. Part of the replication complex composed of NS2, NS3, NS4A, NS4B, NS5A and the RNA-directed RNA polymerase embedded in an ER-derived membranous web. Part of the viral assembly initiation complex composed of NS2, E1, E2, NS3, NS4A, NS5A and the mature core protein. As to quaternary structure, interacts with NS3 serine protease; this interaction stabilizes the folding of NS3 serine protease. NS3-NS4A interaction is essential for NS3 activation and allows membrane anchorage of the latter. Interacts with non-structural protein 5A (via N-terminus). Part of the replication complex composed of NS2, NS3, NS4A, NS4B, NS5A and the RNA-directed RNA polymerase embedded in an ER-derived membranous web. Part of the viral assembly initiation complex composed of NS2, E1, E2, NS3, NS4A, NS5A and the mature core protein. In terms of assembly, homomultimer. Interacts with non-structural protein NS5A. Interacts with host PLA2G4C; this interaction likely initiates the recruitment of replication complexes to lipid droplets. Interacts with host STING; this interaction disrupts the interaction between STING and TBK1 thereby suppressing the interferon signaling. Part of the replication complex composed of NS2, NS3, NS4A, NS4B, NS5A and the RNA-directed RNA polymerase embedded in an ER-derived membranous web. Monomer. Homodimer; dimerization is required for RNA-binding. Interacts with the mature core protein. Interacts (via N-terminus) with non-structural protein 4A. Interacts with non-structural protein 4B. Interacts (via region D2) with RNA-directed RNA polymerase. Part of the viral assembly initiation complex composed of NS2, E1, E2, NS3, NS4A, NS5A and the mature core protein. Part of the replication complex composed of NS2, NS3, NS4A, NS4B, NS5A and the RNA-directed RNA polymerase embedded in an ER-derived membranous web. Interacts with host GRB2. Interacts with host BIN1. Interacts with host PIK3R1. Interacts with host SRCAP. Interacts with host FKBP8. Interacts (via C-terminus) with host VAPB (via MSP domain). Interacts with host EIF2AK2/PKR; this interaction leads to disruption of EIF2AK2 dimerization by NS5A and probably allows the virus to evade the innate immune response. Interacts (via N-terminus) with host PACSIN2 (via N-terminus); this interaction attenuates protein kinase C alpha-mediated phosphorylation of PACSIN2 by disrupting the interaction between PACSIN2 and PRKCA. Interacts (via N-terminus) with host SRC kinase (via SH2 domain). Interacts with most Src-family kinases. Interacts with host IFI27 and SKP2; promotes the ubiquitin-mediated proteasomal degradation of NS5A. Interacts with host GPS2. Interacts with host TNFRSF21; this interaction allows the modulation by the virus of JNK, p38 MAPK, STAT3, and Akt signaling pathways in a DR6-dependent manner. Interacts (via N-terminus) with host CIDEB (via N-terminus); this interaction seems to regulate the association of HCV particles with APOE. Interacts with host CHKA/Choline Kinase-alpha; CHKA bridges host PI4KA and NS5A and potentiates NS5A-stimulated PI4KA activity, which then facilitates the targeting of the ternary complex to the ER for viral replication. Interacts with host SPSB2 (via C-terminus); this interaction targets NS5A for ubiquitination and degradation. Interacts with host RAB18; this interaction may promote the association of NS5A and other replicase components with lipid droplets. Interacts (via region D2) with host PPIA/CYPA; the interaction stimulates RNA-binding ability of NS5A and is dependent on the peptidyl-prolyl cis-trans isomerase activity of PPIA/CYPA. Interacts with host TRIM14; this interaction induces the degradation of NS5A. As to quaternary structure, homooligomer. Interacts with non-structural protein 5A. Interacts with host VAPB. Interacts with host PRK2/PKN2. Interacts with host HNRNPA1 and SEPT6; these interactions facilitate viral replication. Part of the replication complex composed of NS2, NS3, NS4A, NS4B, NS5A and the RNA-directed RNA polymerase. The cofactor is Zn(2+). Mg(2+) serves as cofactor. In terms of processing, specific enzymatic cleavages in vivo yield mature proteins. The structural proteins, core, E1, E2 and p7 are produced by proteolytic processing by host signal peptidases. The core protein precursor is synthesized as a 23 kDa, which is retained in the ER membrane through the hydrophobic signal peptide. Cleavage by the signal peptidase releases the 21 kDa mature core protein. The cleavage of the core protein precursor occurs between aminoacids 176 and 188 but the exact cleavage site is not known. Some degraded forms of the core protein appear as well during the course of infection. The other proteins (p7, NS2, NS3, NS4A, NS4B, NS5A and NS5B) are cleaved by the viral proteases. Autoprocessing between NS2 and NS3 is mediated by the NS2 cysteine protease catalytic domain and regulated by the NS3 N-terminal domain. Phosphorylated by host PKC and PKA. Post-translationally, ubiquitinated; mediated by UBE3A and leading to core protein subsequent proteasomal degradation. In terms of processing, highly N-glycosylated. Palmitoylation is required for NS2/3 autoprocessing and E2 recruitment to membranes. Post-translationally, palmitoylated. This modification may play a role in its polymerization or in protein-protein interactions. In terms of processing, phosphorylated on serines in a basal form termed p56. p58 is a hyperphosphorylated form of p56. p56 and p58 coexist in the cell in roughly equivalent amounts. Hyperphosphorylation is dependent on the presence of NS4A. Host CSNK1A1/CKI-alpha or RPS6KB1 kinases may be responsible for NS5A phosphorylation. Tyrosine phosphorylation is essential for the interaction with host SRC. Post-translationally, ubiquitinated. Ubiquitination, most probably at Lys-2352, mediated by host IFI27 and SKP2 leads to proteasomal degradation, restricting viral infection. Ubiquitination by host TRIM22 leads to interruption of viral replication. In terms of processing, the N-terminus is phosphorylated by host PRK2/PKN2.

It is found in the host endoplasmic reticulum membrane. The protein resides in the host mitochondrion membrane. The protein localises to the virion. Its subcellular location is the host cytoplasm. It localises to the host nucleus. It is found in the host lipid droplet. The protein resides in the virion membrane. The protein localises to the host mitochondrion. Its subcellular location is the host cell membrane. It localises to the host perinuclear region. It carries out the reaction Hydrolysis of four peptide bonds in the viral precursor polyprotein, commonly with Asp or Glu in the P6 position, Cys or Thr in P1 and Ser or Ala in P1'.. It catalyses the reaction a ribonucleoside 5'-triphosphate + H2O = a ribonucleoside 5'-diphosphate + phosphate + H(+). The catalysed reaction is ATP + H2O = ADP + phosphate + H(+). The enzyme catalyses RNA(n) + a ribonucleoside 5'-triphosphate = RNA(n+1) + diphosphate. Its activity is regulated as follows. Inhibited by the antiviral drug hexamethylene amiloride. Inhibition by amantadine appears to be genotype-dependent. Also inhibited by long-alkyl-chain iminosugar derivatives. Activity is up-regulated by PRK2/PKN2-mediated phosphorylation. Packages viral RNA to form a viral nucleocapsid, and promotes virion budding. Participates in the viral particle production as a result of its interaction with the non-structural protein 5A. Binds RNA and may function as a RNA chaperone to induce the RNA structural rearrangements taking place during virus replication. Modulates viral translation initiation by interacting with viral IRES and 40S ribosomal subunit. Affects various cell signaling pathways, host immunity and lipid metabolism. Prevents the establishment of cellular antiviral state by blocking the interferon-alpha/beta (IFN-alpha/beta) and IFN-gamma signaling pathways and by blocking the formation of phosphorylated STAT1 and promoting ubiquitin-mediated proteasome-dependent degradation of STAT1. Activates STAT3 leading to cellular transformation. Regulates the activity of cellular genes, including c-myc and c-fos. May repress the promoter of p53, and sequester CREB3 and SP110 isoform 3/Sp110b in the cytoplasm. Represses cell cycle negative regulating factor CDKN1A, thereby interrupting an important check point of normal cell cycle regulation. Targets transcription factors involved in the regulation of inflammatory responses and in the immune response: suppresses TNF-induced NF-kappa-B activation, and activates AP-1. Binds to dendritic cells (DCs) via C1QR1, resulting in down-regulation of T-lymphocytes proliferation. Alters lipid metabolism by interacting with hepatocellular proteins involved in lipid accumulation and storage. Induces up-regulation of FAS promoter activity, and thereby contributes to the increased triglyceride accumulation in hepatocytes (steatosis). Its function is as follows. Forms a heterodimer with envelope glycoprotein E2, which mediates virus attachment to the host cell, virion internalization through clathrin-dependent endocytosis and fusion with host membrane. Fusion with the host cell is most likely mediated by both E1 and E2, through conformational rearrangements of the heterodimer required for fusion rather than a classical class II fusion mechanism. E1/E2 heterodimer binds host apolipoproteins such as APOB and ApoE thereby forming a lipo-viro-particle (LVP). APOE associated to the LVP allows the initial virus attachment to cell surface receptors such as the heparan sulfate proteoglycans (HSPGs), syndecan-1 (SDC1), syndecan-1 (SDC2), the low-density lipoprotein receptor (LDLR) and scavenger receptor class B type I (SCARB1). The cholesterol transfer activity of SCARB1 allows E2 exposure and binding of E2 to SCARB1 and the tetraspanin CD81. E1/E2 heterodimer binding on CD81 activates the epithelial growth factor receptor (EGFR) signaling pathway. Diffusion of the complex E1-E2-EGFR-SCARB1-CD81 to the cell lateral membrane allows further interaction with Claudin 1 (CLDN1) and occludin (OCLN) to finally trigger HCV entry. In terms of biological role, forms a heterodimer with envelope glycoprotein E1, which mediates virus attachment to the host cell, virion internalization through clathrin-dependent endocytosis and fusion with host membrane. Fusion with the host cell is most likely mediated by both E1 and E2, through conformational rearrangements of the heterodimer required for fusion rather than a classical class II fusion mechanism. The interaction between envelope glycoprotein E2 and host apolipoprotein E/APOE allows the proper assembly, maturation and infectivity of the viral particles. This interaction is probably promoted via the up-regulation of cellular autophagy by the virus. E1/E2 heterodimer binds host apolipoproteins such as APOB and APOE thereby forming a lipo-viro-particle (LVP). APOE associated to the LVP allows the initial virus attachment to cell surface receptors such as the heparan sulfate proteoglycans (HSPGs), syndecan-1 (SDC1), syndecan-1 (SDC2), the low-density lipoprotein receptor (LDLR) and scavenger receptor class B type I (SCARB1). The cholesterol transfer activity of SCARB1 allows E2 exposure and binding of E2 to SCARB1 and the tetraspanin CD81. E1/E2 heterodimer binding on CD81 activates the epithelial growth factor receptor (EGFR) signaling pathway. Diffusion of the complex E1-E2-EGFR-SCARB1-CD81 to the cell lateral membrane allows further interaction with Claudin 1 (CLDN1) and occludin (OCLN) to finally trigger HCV entry. Inhibits host EIF2AK2/PKR activation, preventing the establishment of an antiviral state. Viral ligand for CD209/DC-SIGN and CLEC4M/DC-SIGNR, which are respectively found on dendritic cells (DCs), and on liver sinusoidal endothelial cells and macrophage-like cells of lymph node sinuses. These interactions allow the capture of circulating HCV particles by these cells and subsequent facilitated transmission to permissive cells such as hepatocytes and lymphocyte subpopulations. The interaction between E2 and host amino acid transporter complex formed by SLC3A2 and SLC7A5/LAT1 may facilitate viral entry into host cell. Functionally, ion channel protein that acts as a viroporin and plays an essential role in the assembly, envelopment and secretion of viral particles. Regulates the host cell secretory pathway, which induces the intracellular retention of viral glycoproteins and favors assembly of viral particles. Creates a pore in acidic organelles and releases Ca(2+) and H(+) in the cytoplasm of infected cells, leading to a productive viral infection. High levels of cytoplasmic Ca(2+) may trigger membrane trafficking and transport of viral ER-associated proteins to viroplasms, sites of viral genome replication. This ionic imbalance induces the assembly of the inflammasome complex, which triggers the maturation of pro-IL-1beta into IL-1beta through the action of caspase-1. Targets also host mitochondria and induces mitochondrial depolarization. In addition of its role as a viroporin, acts as a lipid raft adhesion factor. Cysteine protease required for the proteolytic auto-cleavage between the non-structural proteins NS2 and NS3. The N-terminus of NS3 is required for the function of NS2 protease (active region NS2-3). Promotes the initiation of viral particle assembly by mediating the interaction between structural and non-structural proteins. Its function is as follows. Displays three enzymatic activities: serine protease with a chymotrypsin-like fold, NTPase and RNA helicase. NS3 serine protease, in association with NS4A, is responsible for the cleavages of NS3-NS4A, NS4A-NS4B, NS4B-NS5A and NS5A-NS5B. The NS3/NS4A complex prevents phosphorylation of host IRF3, thus preventing the establishment of dsRNA induced antiviral state. The NS3/NS4A complex induces host amino acid transporter component SLC3A2, thus contributing to HCV propagation. NS3 RNA helicase binds to RNA and unwinds both dsDNA and dsRNA in the 3' to 5' direction, and likely resolves RNA complicated stable secondary structures in the template strand. Binds a single ATP and catalyzes the unzipping of a single base pair of dsRNA. Inhibits host antiviral proteins TBK1 and IRF3 thereby preventing the establishment of an antiviral state. Cleaves host MAVS/CARDIF thereby preventing the establishment of an antiviral state. Cleaves host TICAM1/TRIF, thereby disrupting TLR3 signaling and preventing the establishment of an antiviral state. In terms of biological role, peptide cofactor which forms a non-covalent complex with the N-terminal of NS3 serine protease. The NS3/NS4A complex prevents phosphorylation of host IRF3, thus preventing the establishment of dsRNA induced antiviral state. The NS3/NS4A complex induces host amino acid transporter component SLC3A2, thus contributing to HCV propagation. Functionally, induces a specific membrane alteration that serves as a scaffold for the virus replication complex. This membrane alteration gives rise to the so-called ER-derived membranous web that contains the replication complex. NS4B self-interaction contributes to its function in membranous web formation. Promotes host TRIF protein degradation in a CASP8-dependent manner thereby inhibiting host TLR3-mediated interferon signaling. Disrupts the interaction between STING and TBK1 contributing to the inhibition of interferon signaling. Phosphorylated protein that is indispensable for viral replication and assembly. Both hypo- and hyperphosphorylated states are required for the viral life cycle. The hyperphosphorylated form of NS5A is an inhibitor of viral replication. Involved in RNA-binding and especially in binding to the viral genome. Zinc is essential for RNA-binding. Participates in the viral particle production as a result of its interaction with the mature viral core protein. Its interaction with host VAPB may target the viral replication complex to vesicles. Down-regulates viral IRES translation initiation. Mediates interferon resistance, presumably by interacting with and inhibiting host EIF2AK2/PKR. Prevents BIN1-induced apoptosis. Acts as a transcriptional activator of some host genes important for viral replication when localized in the nucleus. Via the interaction with host PACSIN2, modulates lipid droplet formation in order to promote virion assembly. Modulates TNFRSF21/DR6 signaling pathway for viral propagation. Its function is as follows. RNA-dependent RNA polymerase that performs primer-template recognition and RNA synthesis during viral replication. Initiates RNA transcription/replication at a flavin adenine dinucleotide (FAD), resulting in a 5'- FAD cap on viral RNAs. In this way, recognition of viral 5' RNA by host pattern recognition receptors can be bypassed, thereby evading activation of antiviral pathways. The chain is Genome polyprotein from Hepatitis C virus genotype 6h (isolate VN004) (HCV).